A 442-amino-acid polypeptide reads, in one-letter code: Elongation factor 1-gamma (442 aa).

A GST N-terminal domain is found at 2–87 (AAGTLYTYPE…FLSNDALRGS (86 aa)). The GST C-terminal domain occupies 88–216 (TPQASAQVLQ…VKLCEKMAQF (129 aa)). 2 stretches are compositionally biased toward basic and acidic residues: residues 224–242 (MQPKKEAPAKKEKAGKEGG) and 249–263 (QEKKEKKKEEKKAAP). Residues 224–273 (MQPKKEAPAKKEKAGKEGGKQQQPQQEKKEKKKEEKKAAPAEEEMDECEA) form a disordered region. The EF-1-gamma C-terminal domain occupies 281-442 (AKDPYAHLPK…KSFNQGKIFK (162 aa)).

EF-1 is composed of four subunits: alpha, beta, delta, and gamma.

In terms of biological role, probably plays a role in anchoring the complex to other cellular components. The sequence is that of Elongation factor 1-gamma (eef1g) from Carassius auratus (Goldfish).